The chain runs to 152 residues: Probable ribose-5-phosphate isomerase B (152 aa).

10-11 serves as a coordination point for D-ribulose 5-phosphate; the sequence is DH. The active-site Proton acceptor is the C69. Position 70-74 (70-74) interacts with D-ribulose 5-phosphate; the sequence is GTGVG. Residue H102 is the Proton donor of the active site. D103, R113, R136, and R140 together coordinate D-ribulose 5-phosphate.

This sequence belongs to the LacAB/RpiB family. Homodimer.

The catalysed reaction is aldehydo-D-ribose 5-phosphate = D-ribulose 5-phosphate. It participates in carbohydrate degradation; pentose phosphate pathway; D-ribose 5-phosphate from D-ribulose 5-phosphate (non-oxidative stage): step 1/1. In terms of biological role, catalyzes the interconversion of ribulose-5-P and ribose-5-P. This chain is Probable ribose-5-phosphate isomerase B, found in Mycoplasma genitalium (strain ATCC 33530 / DSM 19775 / NCTC 10195 / G37) (Mycoplasmoides genitalium).